Here is a 197-residue protein sequence, read N- to C-terminus: Nucleoid occlusion factor SlmA (197 aa).

The region spanning 7-67 (INRREHILQC…GLIDFIEESL (61 aa)) is the HTH tetR-type domain. Positions 30-49 (TTAKLAAEVGVSEAALYRHF) form a DNA-binding region, H-T-H motif.

Belongs to the nucleoid occlusion factor SlmA family. As to quaternary structure, homodimer. Interacts with FtsZ.

The protein resides in the cytoplasm. The protein localises to the nucleoid. Functionally, required for nucleoid occlusion (NO) phenomenon, which prevents Z-ring formation and cell division over the nucleoid. Acts as a DNA-associated cell division inhibitor that binds simultaneously chromosomal DNA and FtsZ, and disrupts the assembly of FtsZ polymers. SlmA-DNA-binding sequences (SBS) are dispersed on non-Ter regions of the chromosome, preventing FtsZ polymerization at these regions. This Shewanella loihica (strain ATCC BAA-1088 / PV-4) protein is Nucleoid occlusion factor SlmA.